We begin with the raw amino-acid sequence, 463 residues long: MAATTLKDSFPLLTLLGIAFLASVCLSSRSDQDNPFVFESNRFQTLFENENGHIRLLQKFDQHSKLLENLQNYRLLEYKSKPHTIFLPQQTDADFILVVLSGKAILTVLLPNDRNSFSLERGDTIKLPAGTIGYLVNRDDEEDLRVLDLVIPVNRPGEPQSFLLSGNQNQPSILSGFSKNILEASFNTDYKEIEKVLLEEHGKEKYHRRGLKDRRQRGQEENVIVKISRKQIEELNKNAKSSSKKSTSSESEPFNLRSREPIYSNKFGKFFEITPKRNPQLQDLNIFVNYVEINEGSLLLPHYNSRAIVIVTVNEGKGDFELVGQRNENQQGLREEYDEEKEQGEEEIRKQVQNYKAKLSPGDVLVIPAGYPVAIKASSNLNLVGFGINAENNQRYFLAGEEDNVISQIHKPVKELAFPGSAQEVDTLLENQKQSHFANAQPRERERGSQEIKDHLYSILGSF.

The signal sequence occupies residues 1 to 27; sequence MAATTLKDSFPLLTLLGIAFLASVCLS. A Cupin type-1 1 domain is found at 35–194; that stretch reads PFVFESNRFQ…SFNTDYKEIE (160 aa). Residues 235–257 form a disordered region; that stretch reads LNKNAKSSSKKSTSSESEPFNLR. A compositionally biased stretch (low complexity) spans 238–252; sequence NAKSSSKKSTSSESE. The Cupin type-1 2 domain maps to 254 to 426; the sequence is FNLRSREPIY…AFPGSAQEVD (173 aa).

This sequence belongs to the 7S seed storage protein family.

The protein localises to the vacuole. Its subcellular location is the aleurone grain. Functionally, seed storage protein. The chain is Vicilin from Vicia faba (Broad bean).